Consider the following 208-residue polypeptide: ATP-dependent Clp protease proteolytic subunit (208 aa).

The Nucleophile role is filled by serine 98. Histidine 123 is an active-site residue.

This sequence belongs to the peptidase S14 family. In terms of assembly, fourteen ClpP subunits assemble into 2 heptameric rings which stack back to back to give a disk-like structure with a central cavity, resembling the structure of eukaryotic proteasomes.

The protein localises to the cytoplasm. The enzyme catalyses Hydrolysis of proteins to small peptides in the presence of ATP and magnesium. alpha-casein is the usual test substrate. In the absence of ATP, only oligopeptides shorter than five residues are hydrolyzed (such as succinyl-Leu-Tyr-|-NHMec, and Leu-Tyr-Leu-|-Tyr-Trp, in which cleavage of the -Tyr-|-Leu- and -Tyr-|-Trp bonds also occurs).. Its function is as follows. Cleaves peptides in various proteins in a process that requires ATP hydrolysis. Has a chymotrypsin-like activity. Plays a major role in the degradation of misfolded proteins. This Wolbachia pipientis subsp. Culex pipiens (strain wPip) protein is ATP-dependent Clp protease proteolytic subunit.